Here is a 427-residue protein sequence, read N- to C-terminus: Glutamyl-tRNA reductase (427 aa).

Residues threonine 49 to arginine 52, serine 101, glutamate 106 to glutamine 108, and glutamine 112 contribute to the substrate site. Catalysis depends on cysteine 50, which acts as the Nucleophile. Residue glycine 181–isoleucine 186 coordinates NADP(+). Positions phenylalanine 407–proline 427 are disordered. Residues valine 418–proline 427 show a composition bias toward basic and acidic residues.

This sequence belongs to the glutamyl-tRNA reductase family. As to quaternary structure, homodimer.

The catalysed reaction is (S)-4-amino-5-oxopentanoate + tRNA(Glu) + NADP(+) = L-glutamyl-tRNA(Glu) + NADPH + H(+). Its pathway is porphyrin-containing compound metabolism; protoporphyrin-IX biosynthesis; 5-aminolevulinate from L-glutamyl-tRNA(Glu): step 1/2. Catalyzes the NADPH-dependent reduction of glutamyl-tRNA(Glu) to glutamate 1-semialdehyde (GSA). This chain is Glutamyl-tRNA reductase, found in Stenotrophomonas maltophilia (strain R551-3).